We begin with the raw amino-acid sequence, 525 residues long: GMP synthase [glutamine-hydrolyzing] (525 aa).

Residues 9–207 (RILILDFGSQ…VRDICQCEAL (199 aa)) enclose the Glutamine amidotransferase type-1 domain. C86 acts as the Nucleophile in catalysis. Active-site residues include H181 and E183. One can recognise a GMPS ATP-PPase domain in the interval 208 to 400 (WTPAKIIDDA…LGLPYDMLYR (193 aa)). 235-241 (SGGVDSS) is a binding site for ATP.

As to quaternary structure, homodimer.

It catalyses the reaction XMP + L-glutamine + ATP + H2O = GMP + L-glutamate + AMP + diphosphate + 2 H(+). It functions in the pathway purine metabolism; GMP biosynthesis; GMP from XMP (L-Gln route): step 1/1. Catalyzes the synthesis of GMP from XMP. The sequence is that of GMP synthase [glutamine-hydrolyzing] from Salmonella typhimurium (strain LT2 / SGSC1412 / ATCC 700720).